Here is a 346-residue protein sequence, read N- to C-terminus: Peripherin-2 (346 aa).

Residues 1–24 (MALMKTKFNLKRRVKLAQGLWLMN) lie on the Cytoplasmic side of the membrane. A helical membrane pass occupies residues 25-43 (WCCVLAGIALFSMGVFLKI). The Lumenal segment spans residues 44–61 (ELRKRSEVMDNDESHFVP). Residues 62-80 (NSLILMGSLACALNAFPGK) traverse the membrane as a helical segment. The Cytoplasmic portion of the chain corresponds to 81 to 99 (ICYDSLDPTKFPRWKPMLK). Residues 100-123 (PYLIICLIFNIFIFFTGVVCFLTR) form a helical membrane-spanning segment. At 124–264 (GSLESTLAHG…LNYYTSMMSS (141 aa)) the chain is on the lumenal side. Residue asparagine 229 is glycosylated (N-linked (GlcNAc...) asparagine). The chain crosses the membrane as a helical span at residues 265 to 290 (MGGMVFLVWIMEMAVMIGLRFLHTCL). Residues 291–346 (ETIANPEDPECESEGWILEKSLKDTIKSSWELVKSMGKLNKVETAGGEEAGVATVS) are Cytoplasmic-facing.

This sequence belongs to the PRPH2/ROM1 family. As to quaternary structure, homodimer; disulfide-linked. In terms of tissue distribution, found in both rod and cone photoreceptors. Specifically in the rims and incisures of rod and cone outer segment disks.

It localises to the membrane. In terms of biological role, may be involved in the morphogenesis of retina outer segment disks and the development and maintenance of the retina ultrastructure. This is Peripherin-2 (prph2) from Xenopus laevis (African clawed frog).